A 671-amino-acid polypeptide reads, in one-letter code: Solute carrier family 53 member 1 (671 aa).

Residues 1–193 form an important for promoting lysosomal/autophagosomal degradation of PXo bodies following inorganic phosphate (Pi) starvation region; sequence MKFAEHLTAH…DIDRLIQETE (193 aa). At 1-228 the chain is on the cytoplasmic side; that stretch reads MKFAEHLTAH…EQQSPWTTFK (228 aa). Positions 2 to 218 constitute an SPX domain; that stretch reads KFAEHLTAHI…MKRLRVPPLG (217 aa). Residues 152–159 form an important for inositol polyphosphate binding region; the sequence is KILKKHDK. The chain crosses the membrane as a helical span at residues 229–253; the sequence is VGLFSGAFVVLFITVVIAAMFYGFG. Over 254–255 the chain is Extracellular; it reads EN. The helical transmembrane segment at 256-287 threads the bilayer; that stretch reads WRAGMRMFRAPFLIIECLFLWGVNVYGWRSSG. Residues 288-300 are Cytoplasmic-facing; the sequence is VNHVLIFELDPRN. Residues 301 to 328 traverse the membrane as a helical segment; sequence HLSEQNIMEVASVFGVIWACCVLSYIFC. At 329–334 the chain is on the extracellular side; the sequence is DPLGIP. Residues 335–356 traverse the membrane as a helical segment; sequence QYAAPLCLYTLMAAFLLNPTKT. The segment at residues 357–374 is an intramembrane region (helical); the sequence is FHHEARFWAIRILIRVIM. Residues 375-379 lie on the Cytoplasmic side of the membrane; it reads APFCF. The discontinuously helical transmembrane segment at 380–413 threads the bilayer; sequence VNFADFWLADQLNSMVPAFLDIPFLICFFGRSPT. Phosphate contacts are provided by Asp-389 and Asn-392. Over 414–415 the chain is Extracellular; sequence WH. A discontinuously helical transmembrane segment spans residues 416 to 455; that stretch reads KAGKAASHCVEYVSLLHPIVAIMPAYFRFAQCIRRYRDTK. Residues 423 to 627 form the EXS domain; that stretch reads HCVEYVSLLH…DCSDQTTILR (205 aa). Glu-456 is a topological domain (cytoplasmic). The chain crosses the membrane as a helical span at residues 457–488; that stretch reads SFPHLVNAAKYATSFFVVIFAHKYHTTTDTYP. Lys-466 and Tyr-467 together coordinate phosphate. Topologically, residues 489–491 are extracellular; that stretch reads LSK. A helical transmembrane segment spans residues 492-519; the sequence is ENPWFYCWITAAIFSSCYAYTWDIKMDW. The Cytoplasmic segment spans residues 520–538; sequence GLFDSKAGDNRFLREEIVY. The discontinuously helical transmembrane segment at 539–570 threads the bilayer; the sequence is SSTWFYYFGIIEDLILRFSWTLSMSLIEAGYI. Positions 555, 586, and 587 each coordinate phosphate. A helical transmembrane segment spans residues 571 to 609; that stretch reads EGDVMMTILSPLEVFRRFIWNYFRLENEHLNNVGKFRAV. Topologically, residues 610 to 671 are cytoplasmic; sequence RDISVAPMDC…QGESIEDLCS (62 aa).

This sequence belongs to the SYG1 (TC 2.A.94) family. Homodimer. Interacts with the FAR/SIN/STRIPAK complex members Cka and Pp2A-29B. In terms of tissue distribution, detected in PXo bodies found in the enterocytes and progenitors of the midgut and in the hindgut, but rarely occur in the Malpighian tubules, crop, brain, muscles and germlines (at protein level).

It localises to the membrane. The enzyme catalyses phosphate(in) = phosphate(out). Functionally, inorganic ion transporter that mediates phosphate ion export across the cell membrane. Plays a major role in phosphate homeostasis, preventing intracellular phosphate accumulation and possible calcium phosphate precipitation, ultimately preserving calcium signaling. Binds inositol hexakisphosphate (Ins6P) and similar inositol polyphosphates, such as 5-diphospho-inositol pentakisphosphate (5-InsP7), which are important intracellular signaling molecules involved in regulation of phosphate flux. In enterocytes and differentiating progenitors of the gut, promotes the biogenesis and maintenance of organelles called PXo bodies that store intracellular inorganic phosphate (Pi), and also regulates Cka-JNK mediated tissue homeostasis in response to Pi availability in these tissues. Under conditions of adequate Pi, transports Pi into PXo bodies which convert and store the Pi in the form of phospholipids. It also inhibits Cka at the post-transcriptional level to prevent Cka-bsk/JNK mediated cell proliferation. Upon Pi starvation, Pxo expression is down-regulated resulting in the PXo bodies decreasing in phospholipid content until they undergo lysosomal/autophagosomal degradation and release the stored Pi back into the cytosol for use by the cell. Decrease in Pxo expression also activates the Cka protein, which moves to the nucleus to activate bsk/JNK which then induces nearby progenitor cells to proliferate and form new absorptive cells, probably helping the organism to cope with the nutrient deficiency by maximizing absorption of dietary Pi. This is Solute carrier family 53 member 1 from Drosophila melanogaster (Fruit fly).